The following is a 1293-amino-acid chain: Receptor-type tyrosine-protein phosphatase C (1293 aa).

A signal peptide spans 1–25; the sequence is MTMGLWLKLLAFGFALLDTEVFVTG. The Extracellular portion of the chain corresponds to 26-566; it reads QTPTPSDELS…RNESTNFNAK (541 aa). Positions 43–174 are disordered; it reads LPQSDPLPAR…STTDISSGAS (132 aa). 3 stretches are compositionally biased toward polar residues: residues 53–72, 88–110, and 149–169; these read TTESTPPSISERGNGSSETT, QPDSQTPSAGGADTQTFSSQADN, and LARNSSAASPTHTSNVSTTDI. An N-linked (GlcNAc...) asparagine glycan is attached at asparagine 66. N-linked (GlcNAc...) asparagine glycosylation is found at asparagine 152, asparagine 163, asparagine 209, asparagine 213, asparagine 220, asparagine 255, asparagine 260, asparagine 292, asparagine 313, asparagine 324, asparagine 349, asparagine 418, asparagine 429, asparagine 459, and asparagine 491. 2 Fibronectin type-III domains span residues 376–472 and 473–568; these read IPET…TKAD and RPDK…AKAL. Residues 567–588 traverse the membrane as a helical segment; it reads ALIIFLVFLIIVTSIALLVVLY. Topologically, residues 589 to 1293 are cytoplasmic; the sequence is KIYDLRKKRS…SASPAPTQSS (705 aa). Tyrosine-protein phosphatase domains follow at residues 642 to 901 and 933 to 1216; these read FLAE…LVEY and LEAE…IASI. Tyrosine 672 is subject to Phosphotyrosine. Substrate-binding positions include aspartate 810, 842–848, and glutamine 886; that span reads CSAGVGR. Cysteine 842 functions as the Phosphocysteine intermediate in the catalytic mechanism. Residues serine 964, serine 983, serine 986, serine 990, serine 993, serine 994, and serine 998 each carry the phosphoserine modification. A disordered region spans residues 980-1003; it reads LEMSKESEPESDESSDDDSDSEET. Over residues 988–1001 the composition is skewed to acidic residues; that stretch reads PESDESSDDDSDSE. The Phosphocysteine intermediate role is filled by cysteine 1157. Position 1229 is a phosphoserine (serine 1229). Positions 1240 to 1293 are disordered; it reads DGGKQDANCVRPDGPLNKAQEDSRGVGTPEPTNSAEEPEHAANGSASPAPTQSS. The residue at position 1267 (threonine 1267) is a Phosphothreonine. Residues 1283–1293 are compositionally biased toward polar residues; the sequence is GSASPAPTQSS. Position 1286 is a phosphoserine (serine 1286).

Belongs to the protein-tyrosine phosphatase family. Receptor class 1/6 subfamily. As to quaternary structure, interacts with SKAP1. Interacts with DPP4; the interaction is enhanced in an interleukin-12-dependent manner in activated lymphocytes. Binds GANAB and PRKCSH. Interacts with CD53; this interaction stabilizes PTPRC on the membrane and is required for optimal phosphatase activity. Interacts with CLEC10A. In terms of processing, heavily N- and O-glycosylated.

It is found in the cell membrane. It localises to the membrane raft. The protein localises to the synapse. The catalysed reaction is O-phospho-L-tyrosyl-[protein] + H2O = L-tyrosyl-[protein] + phosphate. Protein tyrosine-protein phosphatase required for T-cell activation through the antigen receptor. Acts as a positive regulator of T-cell coactivation upon binding to DPP4. The first PTPase domain has enzymatic activity, while the second one seems to affect the substrate specificity of the first one. Upon T-cell activation, recruits and dephosphorylates SKAP1 and FYN. Dephosphorylates LYN, and thereby modulates LYN activity. Interacts with CLEC10A at antigen presenting cell-T cell contact; CLEC10A on immature dendritic cells recognizes Tn antigen-carrying PTPRC/CD45 receptor on effector T cells and modulates T cell activation threshold to limit autoreactivity. This chain is Receptor-type tyrosine-protein phosphatase C, found in Mus musculus (Mouse).